Here is a 220-residue protein sequence, read N- to C-terminus: Ribose-5-phosphate isomerase A (220 aa).

Substrate is bound by residues 28–31 (TGST), 81–84 (DGAD), and 94–97 (KGGG). Glu-103 serves as the catalytic Proton acceptor. Residue Lys-121 participates in substrate binding.

The protein belongs to the ribose 5-phosphate isomerase family. As to quaternary structure, homodimer.

It carries out the reaction aldehydo-D-ribose 5-phosphate = D-ribulose 5-phosphate. It functions in the pathway carbohydrate degradation; pentose phosphate pathway; D-ribose 5-phosphate from D-ribulose 5-phosphate (non-oxidative stage): step 1/1. Functionally, catalyzes the reversible conversion of ribose-5-phosphate to ribulose 5-phosphate. The chain is Ribose-5-phosphate isomerase A from Leptothrix cholodnii (strain ATCC 51168 / LMG 8142 / SP-6) (Leptothrix discophora (strain SP-6)).